The primary structure comprises 1495 residues: Pregnancy zone protein (1495 aa).

An N-terminal signal peptide occupies residues Met-1–Thr-24. Cys-48 and Cys-86 are disulfide-bonded. 2 N-linked (GlcNAc...) asparagine glycosylation sites follow: Asn-55 and Asn-157. 2 cysteine pairs are disulfide-bonded: Cys-249–Cys-298 and Cys-267–Cys-286. Asn-382, Asn-405, and Asn-412 each carry an N-linked (GlcNAc...) asparagine glycan. A disulfide bond links Cys-469 and Cys-562. A glycan (N-linked (GlcNAc...) asparagine) is linked at Asn-568. 6 disulfide bridges follow: Cys-594-Cys-783, Cys-642-Cys-689, Cys-833-Cys-861, Cys-859-Cys-895, Cys-933-Cys-1339, and Cys-1092-Cys-1140. Residues Pro-686–Arg-744 are bait region. N-linked (GlcNAc...) asparagine glycans are attached at residues Asn-881 and Asn-942. The segment at residues Cys-984–Gln-987 is a cross-link (isoglutamyl cysteine thioester (Cys-Gln)). Asn-1003 is a glycosylation site (N-linked (GlcNAc...) asparagine). 2 N-linked (GlcNAc...) asparagine glycosylation sites follow: Asn-1385 and Asn-1443.

This sequence belongs to the protease inhibitor I39 (alpha-2-macroglobulin) family. As to expression, highest expression in liver, medium expression in ovary, heart and stomach. Low expression in lung, kidney and uterus. Protein found in plasma.

Its subcellular location is the secreted. Functionally, is able to inhibit all four classes of proteinases by a unique 'trapping' mechanism. This protein has a peptide stretch, called the 'bait region' which contains specific cleavage sites for different proteinases. When a proteinase cleaves the bait region, a conformational change is induced in the protein which traps the proteinase. The entrapped enzyme remains active against low molecular weight substrates (activity against high molecular weight substrates is greatly reduced). Following cleavage in the bait region, a thioester bond is hydrolyzed and mediates the covalent binding of the protein to the proteinase. The polypeptide is Pregnancy zone protein (Pzp) (Mus musculus (Mouse)).